A 912-amino-acid chain; its full sequence is DNA ligase 4 (912 aa).

12 residues coordinate ATP: E271, T272, K273, L274, R278, E331, K345, F367, E427, K432, K449, and K451. K273 acts as the N6-AMP-lysine intermediate in catalysis. E331 serves as a coordination point for Mg(2+). E427 contacts Mg(2+). The required for catalytic activity stretch occupies residues 610–620 (LATKHLHVGDD). 2 consecutive BRCT domains span residues 654-743 (KVSN…PRFM) and 846-912 (LRFH…QYLL).

Belongs to the ATP-dependent DNA ligase family. As to quaternary structure, interacts with XRCC4; the LIG4-XRCC4 subcomplex has a 1:2 stoichiometry and XRCC4 is required for LIG4 stability. Component of the core long-range non-homologous end joining (NHEJ) complex (also named DNA-PK complex) composed of PRKDC, LIG4, XRCC4, XRCC6/Ku70, XRCC5/Ku86 and NHEJ1/XLF. Additional component of the NHEJ complex includes PAXX. Following autophosphorylation, PRKDC dissociates from DNA, leading to formation of the short-range NHEJ complex, composed of LIG4, XRCC4, XRCC6/Ku70, XRCC5/Ku86 and NHEJ1/XLF. Interacts with DCLRE1C; the interaction is direct. Interacts with APLF. Mg(2+) serves as cofactor.

The protein localises to the nucleus. It carries out the reaction ATP + (deoxyribonucleotide)n-3'-hydroxyl + 5'-phospho-(deoxyribonucleotide)m = (deoxyribonucleotide)n+m + AMP + diphosphate.. DNA ligase involved in DNA non-homologous end joining (NHEJ); required for double-strand break (DSB) repair and V(D)J recombination. Catalyzes the NHEJ ligation step of the broken DNA during DSB repair by resealing the DNA breaks after the gap filling is completed. Joins single-strand breaks in a double-stranded polydeoxynucleotide in an ATP-dependent reaction. LIG4 is mechanistically flexible: it can ligate nicks as well as compatible DNA overhangs alone, while in the presence of XRCC4, it can ligate ends with 2-nucleotides (nt) microhomology and 1-nt gaps. Forms a subcomplex with XRCC4; the LIG4-XRCC4 subcomplex is responsible for the NHEJ ligation step and XRCC4 enhances the joining activity of LIG4. Binding of the LIG4-XRCC4 complex to DNA ends is dependent on the assembly of the DNA-dependent protein kinase complex DNA-PK to these DNA ends. LIG4 regulates nuclear localization of XRCC4. In Cricetulus griseus (Chinese hamster), this protein is DNA ligase 4.